A 478-amino-acid polypeptide reads, in one-letter code: NADH-quinone oxidoreductase subunit N (478 aa).

13 helical membrane-spanning segments follow: residues 8-28 (LVLP…FGVW), 38-58 (ILWA…LGTG), 62-82 (AFGG…VILV), 106-126 (PILI…GDLM), 160-180 (FVLG…VYGF), 200-220 (IGLL…VSAV), 234-254 (PTPV…ALIA), 268-288 (WGQI…IAGI), 300-320 (SSIS…AAGV), 322-342 (SMLL…AFIL), 368-388 (AFAL…LGFF), 398-418 (IGAG…IGAF), and 445-465 (FAFL…MAGV).

Belongs to the complex I subunit 2 family. NDH-1 is composed of 14 different subunits. Subunits NuoA, H, J, K, L, M, N constitute the membrane sector of the complex.

The protein localises to the cellular chromatophore membrane. The enzyme catalyses a quinone + NADH + 5 H(+)(in) = a quinol + NAD(+) + 4 H(+)(out). In terms of biological role, NDH-1 shuttles electrons from NADH, via FMN and iron-sulfur (Fe-S) centers, to quinones in the respiratory chain. The immediate electron acceptor for the enzyme in this species is believed to be ubiquinone. Couples the redox reaction to proton translocation (for every two electrons transferred, four hydrogen ions are translocated across the cytoplasmic membrane), and thus conserves the redox energy in a proton gradient. The polypeptide is NADH-quinone oxidoreductase subunit N (Rhodobacter capsulatus (Rhodopseudomonas capsulata)).